Consider the following 610-residue polypeptide: Elongation factor 4 (610 aa).

The tr-type G domain maps to 13 to 195 (SHIRNFSIVA…AIVRKLPAPK (183 aa)). Residues 25 to 30 (DHGKST) and 142 to 145 (NKID) contribute to the GTP site.

It belongs to the TRAFAC class translation factor GTPase superfamily. Classic translation factor GTPase family. LepA subfamily.

It is found in the cell inner membrane. The catalysed reaction is GTP + H2O = GDP + phosphate + H(+). Required for accurate and efficient protein synthesis under certain stress conditions. May act as a fidelity factor of the translation reaction, by catalyzing a one-codon backward translocation of tRNAs on improperly translocated ribosomes. Back-translocation proceeds from a post-translocation (POST) complex to a pre-translocation (PRE) complex, thus giving elongation factor G a second chance to translocate the tRNAs correctly. Binds to ribosomes in a GTP-dependent manner. The sequence is that of Elongation factor 4 from Rhizobium etli (strain CIAT 652).